The primary structure comprises 407 residues: Protease ElaD (407 aa).

Histidine 231 is an active-site residue. The active-site Nucleophile is cysteine 317.

The protein belongs to the peptidase C79 family.

Protease that can act as an efficient and specific deubiquitinating enzyme in vitro. Does not possess desumoylating and deneddylating activities. The physiological substrate is unknown. This Escherichia coli O157:H7 protein is Protease ElaD (elaD).